The sequence spans 461 residues: Zinc finger protein ZFP2 (461 aa).

13 C2H2-type zinc fingers span residues 102 to 124, 130 to 152, 158 to 180, 186 to 208, 214 to 236, 242 to 264, 270 to 292, 298 to 320, 326 to 348, 354 to 376, 382 to 404, 410 to 432, and 438 to 460; these read YECN…QRIH, YKCN…QRIH, YKCN…QRTH, YQCK…ERIH, YECN…QRSH, YECS…QRNH, YKCN…QRLH, FECN…RRIH, YECM…QVIH, YECD…QRTH, and YQCN…QRTH.

This sequence belongs to the krueppel C2H2-type zinc-finger protein family.

The protein localises to the nucleus. In terms of biological role, probable transcription factor involved in neuronal differentiation and/or phenotypic maintenance. The sequence is that of Zinc finger protein ZFP2 (ZFP2) from Homo sapiens (Human).